Consider the following 334-residue polypeptide: Malate dehydrogenase, cytoplasmic (334 aa).

11–17 contributes to the NAD(+) binding site; that stretch reads GAAGQIA. 2 residues coordinate substrate: Arg-92 and Arg-98. Residues Asn-105, Gln-112, and 129-131 each bind NAD(+); that span reads VGN. Residues Asn-131 and Arg-162 each contribute to the substrate site. His-187 serves as the catalytic Proton acceptor.

This sequence belongs to the LDH/MDH superfamily. MDH type 2 family. In terms of assembly, homodimer.

The protein resides in the cytoplasm. Its subcellular location is the cytosol. It carries out the reaction (S)-malate + NAD(+) = oxaloacetate + NADH + H(+). The catalysed reaction is (S)-2-hydroxyglutarate + NAD(+) = 2-oxoglutarate + NADH + H(+). Functionally, catalyzes the reduction of aromatic alpha-keto acids in the presence of NADH. Plays essential roles in the malate-aspartate shuttle and the tricarboxylic acid cycle, important in mitochondrial NADH supply for oxidative phosphorylation. Catalyzes the reduction of 2-oxoglutarate to 2-hydroxyglutarate, leading to elevated reactive oxygen species (ROS). The sequence is that of Malate dehydrogenase, cytoplasmic (MDH1) from Gallus gallus (Chicken).